The chain runs to 427 residues: 3-phosphoshikimate 1-carboxyvinyltransferase (427 aa).

3-phosphoshikimate is bound by residues K20, S21, and R25. Position 20 (K20) interacts with phosphoenolpyruvate. Residues G92 and R120 each contribute to the phosphoenolpyruvate site. Residues S166, Q168, D312, and K339 each coordinate 3-phosphoshikimate. Q168 contacts phosphoenolpyruvate. D312 serves as the catalytic Proton acceptor. R343 and R385 together coordinate phosphoenolpyruvate.

The protein belongs to the EPSP synthase family. Monomer.

The protein resides in the cytoplasm. The enzyme catalyses 3-phosphoshikimate + phosphoenolpyruvate = 5-O-(1-carboxyvinyl)-3-phosphoshikimate + phosphate. It functions in the pathway metabolic intermediate biosynthesis; chorismate biosynthesis; chorismate from D-erythrose 4-phosphate and phosphoenolpyruvate: step 6/7. Catalyzes the transfer of the enolpyruvyl moiety of phosphoenolpyruvate (PEP) to the 5-hydroxyl of shikimate-3-phosphate (S3P) to produce enolpyruvyl shikimate-3-phosphate and inorganic phosphate. In Streptococcus pyogenes serotype M4 (strain MGAS10750), this protein is 3-phosphoshikimate 1-carboxyvinyltransferase.